Consider the following 820-residue polypeptide: Trimethylamine-N-oxide reductase (820 aa).

Residues 1-33 constitute a signal peptide (tat-type signal); the sequence is MAITRRSFLKGVATTSAASVIGPSLLASASANA. Ser-179 contributes to the Mo-bis(molybdopterin guanine dinucleotide) binding site.

Belongs to the prokaryotic molybdopterin-containing oxidoreductase family. Mo-bis(molybdopterin guanine dinucleotide) serves as cofactor. In terms of processing, predicted to be exported by the Tat system. The position of the signal peptide cleavage has not been experimentally proven.

Its subcellular location is the periplasm. The catalysed reaction is trimethylamine + 2 Fe(III)-[cytochrome c] + H2O = trimethylamine N-oxide + 2 Fe(II)-[cytochrome c] + 3 H(+). In terms of biological role, reduces trimethylamine-N-oxide (TMAO) into trimethylamine; an anaerobic reaction coupled to energy-yielding reactions. The polypeptide is Trimethylamine-N-oxide reductase (torA) (Vibrio vulnificus (strain YJ016)).